The following is a 466-amino-acid chain: 3-isopropylmalate dehydratase large subunit (466 aa).

[4Fe-4S] cluster-binding residues include Cys-347, Cys-407, and Cys-410.

It belongs to the aconitase/IPM isomerase family. LeuC type 1 subfamily. In terms of assembly, heterodimer of LeuC and LeuD. [4Fe-4S] cluster is required as a cofactor.

It carries out the reaction (2R,3S)-3-isopropylmalate = (2S)-2-isopropylmalate. It participates in amino-acid biosynthesis; L-leucine biosynthesis; L-leucine from 3-methyl-2-oxobutanoate: step 2/4. Functionally, catalyzes the isomerization between 2-isopropylmalate and 3-isopropylmalate, via the formation of 2-isopropylmaleate. The protein is 3-isopropylmalate dehydratase large subunit of Shigella flexneri serotype 5b (strain 8401).